Reading from the N-terminus, the 433-residue chain is Serine--tRNA ligase (433 aa).

Residue 235–237 participates in L-serine binding; the sequence is TSE. An ATP-binding site is contributed by 266-268; sequence RSE. Residue Glu289 coordinates L-serine. Residue 353–356 coordinates ATP; the sequence is EISS. An L-serine-binding site is contributed by Ser388.

This sequence belongs to the class-II aminoacyl-tRNA synthetase family. Type-1 seryl-tRNA synthetase subfamily. In terms of assembly, homodimer. The tRNA molecule binds across the dimer.

It localises to the cytoplasm. It carries out the reaction tRNA(Ser) + L-serine + ATP = L-seryl-tRNA(Ser) + AMP + diphosphate + H(+). The enzyme catalyses tRNA(Sec) + L-serine + ATP = L-seryl-tRNA(Sec) + AMP + diphosphate + H(+). It participates in aminoacyl-tRNA biosynthesis; selenocysteinyl-tRNA(Sec) biosynthesis; L-seryl-tRNA(Sec) from L-serine and tRNA(Sec): step 1/1. Catalyzes the attachment of serine to tRNA(Ser). Is also able to aminoacylate tRNA(Sec) with serine, to form the misacylated tRNA L-seryl-tRNA(Sec), which will be further converted into selenocysteinyl-tRNA(Sec). This chain is Serine--tRNA ligase, found in Burkholderia vietnamiensis (strain G4 / LMG 22486) (Burkholderia cepacia (strain R1808)).